The primary structure comprises 561 residues: Asparagine synthetase [glutamine-hydrolyzing] (561 aa).

C2 serves as the catalytic For GATase activity. The region spanning C2–K191 is the Glutamine amidotransferase type-2 domain. Residues R49 to V53, N75 to E77, and D97 contribute to the L-glutamine site. Residues H213–Y536 form the Asparagine synthetase domain. ATP contacts are provided by residues L256, I288, and S363–G364. K385 carries the post-translational modification N6-acetyllysine. T545 carries the post-translational modification Phosphothreonine. The residue at position 557 (S557) is a Phosphoserine.

It catalyses the reaction L-aspartate + L-glutamine + ATP + H2O = L-asparagine + L-glutamate + AMP + diphosphate + H(+). The protein operates within amino-acid biosynthesis; L-asparagine biosynthesis; L-asparagine from L-aspartate (L-Gln route): step 1/1. In Mus musculus (Mouse), this protein is Asparagine synthetase [glutamine-hydrolyzing] (Asns).